The sequence spans 992 residues: UPF0182 protein BCG_3215c (992 aa).

7 helical membrane passes run 18 to 38, 63 to 83, 113 to 133, 175 to 195, 210 to 230, 259 to 279, and 287 to 307; these read ILIM…RLID, IVVC…GLAL, LVGI…AQSY, LVSV…FGGI, VQLV…YWLD, KLIL…AIAL, and IGLV…PLIV. The tract at residues 906 to 938 is disordered; that stretch reads PTEAAVPPSPAANPPPPASGPQPPPVTAAPPVP. A compositionally biased stretch (pro residues) spans 912–938; the sequence is PPSPAANPPPPASGPQPPPVTAAPPVP.

This sequence belongs to the UPF0182 family.

The protein resides in the cell membrane. The sequence is that of UPF0182 protein BCG_3215c from Mycobacterium bovis (strain BCG / Pasteur 1173P2).